We begin with the raw amino-acid sequence, 884 residues long: Alanine--tRNA ligase (884 aa).

Histidine 570, histidine 574, cysteine 676, and histidine 680 together coordinate Zn(2+).

The protein belongs to the class-II aminoacyl-tRNA synthetase family. Requires Zn(2+) as cofactor.

It localises to the cytoplasm. The catalysed reaction is tRNA(Ala) + L-alanine + ATP = L-alanyl-tRNA(Ala) + AMP + diphosphate. Its function is as follows. Catalyzes the attachment of alanine to tRNA(Ala) in a two-step reaction: alanine is first activated by ATP to form Ala-AMP and then transferred to the acceptor end of tRNA(Ala). Also edits incorrectly charged Ser-tRNA(Ala) and Gly-tRNA(Ala) via its editing domain. This is Alanine--tRNA ligase from Lawsonia intracellularis (strain PHE/MN1-00).